A 205-amino-acid polypeptide reads, in one-letter code: Protein N-terminal glutamine amidohydrolase (205 aa).

Residues Cys-20, His-74, and Asp-90 contribute to the active site.

It belongs to the NTAQ1 family. As to quaternary structure, monomer.

The catalysed reaction is N-terminal L-glutaminyl-[protein] + H2O = N-terminal L-glutamyl-[protein] + NH4(+). Functionally, mediates the side-chain deamidation of N-terminal glutamine residues to glutamate, an important step in N-end rule pathway of protein degradation. Conversion of the resulting N-terminal glutamine to glutamate renders the protein susceptible to arginylation, polyubiquitination and degradation as specified by the N-end rule. Does not act on substrates with internal or C-terminal glutamine and does not act on non-glutamine residues in any position. This is Protein N-terminal glutamine amidohydrolase (tun) from Drosophila melanogaster (Fruit fly).